The primary structure comprises 1733 residues: Desertorin synthase (1733 aa).

The interval 21–358 is N-terminal acylcarrier protein transacylase domain (SAT); sequence RIRQQSRSSR…HAPTRDLTEW (338 aa). Residues 372–799 enclose the Ketosynthase family 3 (KS3) domain; it reads DCRIAVVGMS…GGNTALLLEE (428 aa). The span at 406–422 shows a compositional bias: basic and acidic residues; the sequence is HVPPDRYDVQSHTDPTG. The interval 406–429 is disordered; sequence HVPPDRYDVQSHTDPTGRRMNTSQ. Residues C544, H679, and H718 each act as for beta-ketoacyl synthase activity in the active site. The segment at 903–1211 is malonyl-CoA:ACP transacylase (MAT) domain; sequence FVFSGQGSFY…DNWHTLAGSM (309 aa). The tract at residues 1288–1420 is N-terminal hotdog fold; sequence HRIVEETFWA…GTVSVGNAAS (133 aa). The region spanning 1288-1598 is the PKS/mFAS DH domain; the sequence is HRIVEETFWA…LRPLPRILMH (311 aa). Residues 1299-1594 form a product template (PT) domain region; sequence GGRVVMESNV…AGVTLRPLPR (296 aa). The Proton acceptor; for dehydratase activity role is filled by H1320. The C-terminal hotdog fold stretch occupies residues 1448-1598; the sequence is ADRLTRDTVY…LRPLPRILMH (151 aa). D1506 functions as the Proton donor; for dehydratase activity in the catalytic mechanism. Positions 1608–1659 are disordered; that stretch reads HNWGNSPAKPEAKPEMVPTSGSSSAAGSPSGSSAGPLSIPERLADPSETSFQ. The span at 1627 to 1643 shows a compositional bias: low complexity; that stretch reads SGSSSAAGSPSGSSAGP. Residues 1659 to 1733 enclose the Carrier domain; it reads QSKASKVSKA…TVGEVKRQML (75 aa). Residue S1696 is modified to O-(pantetheine 4'-phosphoryl)serine.

Pantetheine 4'-phosphate serves as cofactor.

It functions in the pathway secondary metabolite biosynthesis. Functionally, non-reducing polyketide synthase; part of the gene cluster that mediates the biosynthesis of the bicoumarin desertorin. The non-reducing polyketide synthase desS first catalyzes the formation of the pentaketidic 4,7-dihydroxy-5-methylcoumarin from acetyl coenzyme A and 4 malonyl coenzyme A molecules. Further O-methylation by desB leads to the formation of 7-demethylsiderin. Then, an oxidative phenol coupling catalyzed by the cytochrome P450 monooxygenase desC forms the 6,8'-dimer M-desertorin A via dimerization the monomeric precursor, 7-demethylsiderin. M-desertorin A is further converted to M-desertorin C. This chain is Desertorin synthase, found in Aspergillus desertorum (Emericella desertorum).